Reading from the N-terminus, the 276-residue chain is Putative pyruvate, phosphate dikinase regulatory protein (276 aa).

153–160 is a binding site for ADP; it reads GISRTSKT.

This sequence belongs to the pyruvate, phosphate/water dikinase regulatory protein family. PDRP subfamily.

The catalysed reaction is N(tele)-phospho-L-histidyl/L-threonyl-[pyruvate, phosphate dikinase] + ADP = N(tele)-phospho-L-histidyl/O-phospho-L-threonyl-[pyruvate, phosphate dikinase] + AMP + H(+). It catalyses the reaction N(tele)-phospho-L-histidyl/O-phospho-L-threonyl-[pyruvate, phosphate dikinase] + phosphate + H(+) = N(tele)-phospho-L-histidyl/L-threonyl-[pyruvate, phosphate dikinase] + diphosphate. In terms of biological role, bifunctional serine/threonine kinase and phosphorylase involved in the regulation of the pyruvate, phosphate dikinase (PPDK) by catalyzing its phosphorylation/dephosphorylation. This Brucella anthropi (strain ATCC 49188 / DSM 6882 / CCUG 24695 / JCM 21032 / LMG 3331 / NBRC 15819 / NCTC 12168 / Alc 37) (Ochrobactrum anthropi) protein is Putative pyruvate, phosphate dikinase regulatory protein.